A 314-amino-acid chain; its full sequence is Chlorinase cctP2 (314 aa).

Basic and acidic residues predominate over residues 1–14 (MEGKTSRYQDEAHD). Positions 1–24 (MEGKTSRYQDEAHDSAGSFNEETE) are disordered. 2 consecutive short sequence motifs (HXXHC) follow at residues 150 to 154 (HALHC) and 177 to 181 (HIEHC).

The protein belongs to the ustYa family.

Its pathway is mycotoxin biosynthesis. Functionally, chlorinase; part of the gene cluster that mediates the biosynthesis of the mycotoxin cyclochlorotine, a hepatotoxic and carcinogenic cyclic chlorinated pentapeptide. Within the pathway, cctP2 catalyzes the formation of isocyclochlorotine via dichlorination of the Pro from the isocyclotine skeleton. The NRPS cctN initially catalyzes the condensation of L-serine (Ser), Pro, L-2-aminobutyrate (2Abu), Ser, and beta-Phe in this order to produce isocyclotine. After the dichlorination of Pro2 catalyzed by cctP2 to produce isocyclochlorotine, the cctO-mediated transacylation of isocyclochlorotine can furnish cyclochlorotine. The subsequent hydroxylation of cyclochlorotine by cctR yields hydroxycyclochlorotine as the final product. CctP1 probably acts as a phenylalanine aminomutase and provides the uncommon building block beta-Phe. Furthermore, 2Abu can be synthesized from threonine by one of the threonine dehydratases and transaminases localized outside of the cluster. The functions of the remaining proteins encoded by the cluster, cctM and cctT, have not been identified yet. This Talaromyces islandicus (Penicillium islandicum) protein is Chlorinase cctP2.